Consider the following 250-residue polypeptide: Type III pantothenate kinase (250 aa).

13 to 20 (DVGNSYLK) lines the ATP pocket. 110-113 (GNDL) is a binding site for substrate. The active-site Proton acceptor is D112. T134 provides a ligand contact to ATP. T186 contributes to the substrate binding site.

It belongs to the type III pantothenate kinase family. As to quaternary structure, homodimer. NH4(+) is required as a cofactor. Requires K(+) as cofactor.

It is found in the cytoplasm. The enzyme catalyses (R)-pantothenate + ATP = (R)-4'-phosphopantothenate + ADP + H(+). The protein operates within cofactor biosynthesis; coenzyme A biosynthesis; CoA from (R)-pantothenate: step 1/5. Catalyzes the phosphorylation of pantothenate (Pan), the first step in CoA biosynthesis. This is Type III pantothenate kinase from Mycoplasmopsis synoviae (strain 53) (Mycoplasma synoviae).